We begin with the raw amino-acid sequence, 275 residues long: 2,3,4,5-tetrahydropyridine-2,6-dicarboxylate N-succinyltransferase (275 aa).

2 residues coordinate substrate: Arg106 and Asp143.

It belongs to the transferase hexapeptide repeat family. Homotrimer.

The protein localises to the cytoplasm. The catalysed reaction is (S)-2,3,4,5-tetrahydrodipicolinate + succinyl-CoA + H2O = (S)-2-succinylamino-6-oxoheptanedioate + CoA. Its pathway is amino-acid biosynthesis; L-lysine biosynthesis via DAP pathway; LL-2,6-diaminopimelate from (S)-tetrahydrodipicolinate (succinylase route): step 1/3. The chain is 2,3,4,5-tetrahydropyridine-2,6-dicarboxylate N-succinyltransferase from Cupriavidus pinatubonensis (strain JMP 134 / LMG 1197) (Cupriavidus necator (strain JMP 134)).